The following is an 800-amino-acid chain: Phenylalanine--tRNA ligase beta subunit (800 aa).

The region spanning 38–147 is the tRNA-binding domain; it reads GAELKGVVAA…PGTVPGTPIG (110 aa). The region spanning 401-477 is the B5 domain; the sequence is VASPEVRMRW…RTLGYDAIPE (77 aa). Aspartate 455, aspartate 461, glutamate 464, and glutamate 465 together coordinate Mg(2+). An FDX-ACB domain is found at 708–799; sequence PRLPAVLRDV…LRERVGAELR (92 aa).

This sequence belongs to the phenylalanyl-tRNA synthetase beta subunit family. Type 1 subfamily. Tetramer of two alpha and two beta subunits. Requires Mg(2+) as cofactor.

It is found in the cytoplasm. It carries out the reaction tRNA(Phe) + L-phenylalanine + ATP = L-phenylalanyl-tRNA(Phe) + AMP + diphosphate + H(+). This Anaeromyxobacter dehalogenans (strain 2CP-C) protein is Phenylalanine--tRNA ligase beta subunit.